Consider the following 461-residue polypeptide: Serine/threonine-protein kinase VHS1 (461 aa).

Positions 12–337 constitute a Protein kinase domain; that stretch reads YLITSQIGEG…KEVSSITSFT (326 aa). ATP-binding positions include 18 to 26 and Lys-41; that span reads IGEGAYGLV. Asp-185 (proton acceptor) is an active-site residue. The interval 384–433 is disordered; that stretch reads LSYTSSSEEEDGIKEGIDDDNGSRSGSFGTLDTDTGLHSSFTSTSCESDN. The segment covering 390-403 has biased composition (acidic residues); it reads SEEEDGIKEGIDDD. A compositionally biased stretch (polar residues) spans 406–433; sequence SRSGSFGTLDTDTGLHSSFTSTSCESDN.

It belongs to the protein kinase superfamily. Ser/Thr protein kinase family.

It is found in the cytoplasm. It catalyses the reaction L-seryl-[protein] + ATP = O-phospho-L-seryl-[protein] + ADP + H(+). The enzyme catalyses L-threonyl-[protein] + ATP = O-phospho-L-threonyl-[protein] + ADP + H(+). In terms of biological role, probable serine/threonine protein kinase involved in the G1-S transition. This is Serine/threonine-protein kinase VHS1 (VHS1) from Saccharomyces cerevisiae (strain ATCC 204508 / S288c) (Baker's yeast).